The chain runs to 350 residues: MTGQELAGAEVEADVALAPLTTLRVGPVARRLITATSTEQLVAALRAPVGRDALILAGGSNVVLADDMSDLTVIRVANSEITVRDGIVRAEAGANWDDVVVTALAHGLGGLECLSGIPGSAGATPVQNVGAYGSEVADTIRRVRLFDRRTGRDDWVTPQDMAFGYRTSVLKHSDHAVVLEVEFALDVGGRSAPLRYGELARALDVEPGGRADPVAVRDAVLALRRGKGMVLDEPDRDTWSVGSFFTNPVVTTAQHERLAAEVDGPVPSYPAPDGVKLAAGWLVEHAGFGKGYPGDDAPARLSTKHALAVTNRGHATTADVIALARTVRDGVRTTFGIELTPEPTLVGCTL.

An FAD-binding PCMH-type domain is found at 25-194; the sequence is VGPVARRLIT…LDVGGRSAPL (170 aa). Arg-166 is an active-site residue. Ser-243 functions as the Proton donor in the catalytic mechanism. Residue Glu-342 is part of the active site.

The protein belongs to the MurB family. FAD serves as cofactor.

The protein localises to the cytoplasm. It carries out the reaction UDP-N-acetyl-alpha-D-muramate + NADP(+) = UDP-N-acetyl-3-O-(1-carboxyvinyl)-alpha-D-glucosamine + NADPH + H(+). It functions in the pathway cell wall biogenesis; peptidoglycan biosynthesis. Its function is as follows. Cell wall formation. This Mycobacterium sp. (strain MCS) protein is UDP-N-acetylenolpyruvoylglucosamine reductase.